Consider the following 62-residue polypeptide: Photosystem II reaction center protein Z (62 aa).

2 helical membrane passes run 8-28 (ALFALIATSSILLISVPIVFA) and 41-61 (FSGTSLWIGLVFLVAILNSLI).

The protein belongs to the PsbZ family. PSII is composed of 1 copy each of membrane proteins PsbA, PsbB, PsbC, PsbD, PsbE, PsbF, PsbH, PsbI, PsbJ, PsbK, PsbL, PsbM, PsbT, PsbY, PsbZ, Psb30/Ycf12, at least 3 peripheral proteins of the oxygen-evolving complex and a large number of cofactors. It forms dimeric complexes.

Its subcellular location is the plastid. The protein localises to the chloroplast thylakoid membrane. Functionally, may control the interaction of photosystem II (PSII) cores with the light-harvesting antenna, regulates electron flow through the 2 photosystem reaction centers. PSII is a light-driven water plastoquinone oxidoreductase, using light energy to abstract electrons from H(2)O, generating a proton gradient subsequently used for ATP formation. The sequence is that of Photosystem II reaction center protein Z from Drimys granadensis.